The following is a 570-amino-acid chain: Sulfite reductase [NADPH] hemoprotein beta-component (570 aa).

C434, C440, C479, and C483 together coordinate [4Fe-4S] cluster. Position 483 (C483) interacts with siroheme.

This sequence belongs to the nitrite and sulfite reductase 4Fe-4S domain family. In terms of assembly, alpha(8)-beta(8). The alpha component is a flavoprotein, the beta component is a hemoprotein. The cofactor is siroheme. Requires [4Fe-4S] cluster as cofactor.

The enzyme catalyses hydrogen sulfide + 3 NADP(+) + 3 H2O = sulfite + 3 NADPH + 4 H(+). It participates in sulfur metabolism; hydrogen sulfide biosynthesis; hydrogen sulfide from sulfite (NADPH route): step 1/1. In terms of biological role, component of the sulfite reductase complex that catalyzes the 6-electron reduction of sulfite to sulfide. This is one of several activities required for the biosynthesis of L-cysteine from sulfate. The chain is Sulfite reductase [NADPH] hemoprotein beta-component from Salmonella arizonae (strain ATCC BAA-731 / CDC346-86 / RSK2980).